Reading from the N-terminus, the 373-residue chain is ADP-forming sulfoacetate-CoA ligase subunit SauC (373 aa).

The ATP-grasp domain maps to Lys9 to Leu249. Phe35–Ile97 lines the ATP pocket. Glu186 and Asn188 together coordinate Mg(2+).

This sequence belongs to the succinate/malate CoA ligase beta subunit family. As to quaternary structure, forms a complex with SauD. Mg(2+) is required as a cofactor.

The catalysed reaction is sulfoacetate + ATP + CoA = sulfoacetyl-CoA + ADP + phosphate. Involved in the degradation of sulfoacetate. Catalyzes the CoA- and ATP-dependent conversion of sulfoacetate to sulfoacetyl-CoA and ADP. Cannot use other sulfonic and carboxylic acids, and shows only residual activity with 3-sulfopropanoate and malonic acid. The protein is ADP-forming sulfoacetate-CoA ligase subunit SauC of Bilophila wadsworthia (strain 3_1_6).